A 270-amino-acid chain; its full sequence is Aliphatic sulfonates import ATP-binding protein SsuB (270 aa).

Residues 17–238 (LASKGLRKTF…ARGSHRLAAL (222 aa)) form the ABC transporter domain. 49 to 56 (GRSGCGKS) lines the ATP pocket. The segment at 248 to 270 (STPGTAPEPDPVAPLPTQLRWAH) is disordered.

Belongs to the ABC transporter superfamily. Aliphatic sulfonates importer (TC 3.A.1.17.2) family. As to quaternary structure, the complex is composed of two ATP-binding proteins (SsuB), two transmembrane proteins (SsuC) and a solute-binding protein (SsuA).

Its subcellular location is the cell inner membrane. The enzyme catalyses ATP + H2O + aliphatic sulfonate-[sulfonate-binding protein]Side 1 = ADP + phosphate + aliphatic sulfonateSide 2 + [sulfonate-binding protein]Side 1.. In terms of biological role, part of the ABC transporter complex SsuABC involved in aliphatic sulfonates import. Responsible for energy coupling to the transport system. In Pseudomonas putida (strain ATCC 47054 / DSM 6125 / CFBP 8728 / NCIMB 11950 / KT2440), this protein is Aliphatic sulfonates import ATP-binding protein SsuB.